A 398-amino-acid polypeptide reads, in one-letter code: 1-deoxy-D-xylulose 5-phosphate reductoisomerase (398 aa).

Residues Thr11, Gly12, Ser13, Ile14, and Asn125 each coordinate NADPH. Lys126 is a binding site for 1-deoxy-D-xylulose 5-phosphate. Glu127 lines the NADPH pocket. Mn(2+) is bound at residue Asp151. Positions 152, 153, 186, and 209 each coordinate 1-deoxy-D-xylulose 5-phosphate. Position 153 (Glu153) interacts with Mn(2+). Gly215 is an NADPH binding site. 1-deoxy-D-xylulose 5-phosphate contacts are provided by Ser222, Asn227, Lys228, and Glu231. Glu231 contributes to the Mn(2+) binding site.

This sequence belongs to the DXR family. The cofactor is Mg(2+). Requires Mn(2+) as cofactor.

The catalysed reaction is 2-C-methyl-D-erythritol 4-phosphate + NADP(+) = 1-deoxy-D-xylulose 5-phosphate + NADPH + H(+). It participates in isoprenoid biosynthesis; isopentenyl diphosphate biosynthesis via DXP pathway; isopentenyl diphosphate from 1-deoxy-D-xylulose 5-phosphate: step 1/6. Its function is as follows. Catalyzes the NADPH-dependent rearrangement and reduction of 1-deoxy-D-xylulose-5-phosphate (DXP) to 2-C-methyl-D-erythritol 4-phosphate (MEP). The sequence is that of 1-deoxy-D-xylulose 5-phosphate reductoisomerase from Acinetobacter baylyi (strain ATCC 33305 / BD413 / ADP1).